A 373-amino-acid polypeptide reads, in one-letter code: Alanine racemase (373 aa).

Lys-37 (proton acceptor; specific for D-alanine) is an active-site residue. The residue at position 37 (Lys-37) is an N6-(pyridoxal phosphate)lysine. Arg-135 contacts substrate. Residue Tyr-266 is the Proton acceptor; specific for L-alanine of the active site. A substrate-binding site is contributed by Met-313.

Belongs to the alanine racemase family. It depends on pyridoxal 5'-phosphate as a cofactor.

The enzyme catalyses L-alanine = D-alanine. The protein operates within amino-acid biosynthesis; D-alanine biosynthesis; D-alanine from L-alanine: step 1/1. Catalyzes the interconversion of L-alanine and D-alanine. This organism is able to use both L- and D-alanine as a nitrogen source. May also prevent D-alanine from interfering with the use of L-alanine. The polypeptide is Alanine racemase (alr) (Methanococcus maripaludis (strain DSM 14266 / JCM 13030 / NBRC 101832 / S2 / LL)).